Reading from the N-terminus, the 577-residue chain is NKAP family protein UM04995 (577 aa).

Residues 1 to 479 (MPTLAERLGS…YGGALLPGEG (479 aa)) are disordered. Basic and acidic residues predominate over residues 20 to 31 (KSSHDREQELRS). Polar residues predominate over residues 36-49 (SKQTSRNTAHQDLA). Positions 50–60 (SSERRSIDREL) are enriched in basic and acidic residues. Positions 70-89 (SPLSSPQNGSSPRRQRGSPS) are enriched in low complexity. 3 stretches are compositionally biased toward basic and acidic residues: residues 127–163 (PRED…DSRR), 170–193 (SGDR…REAP), and 265–297 (DSSS…DKHH). Basic residues-rich tracts occupy residues 298-316 (SSSR…RRSS) and 325-336 (SRHRHTRSSRSH). Acidic residues predominate over residues 340 to 350 (DDDDDDDEDVD). Over residues 363–385 (KVSDGSDSGRSESETDSDSDARS) the composition is skewed to basic and acidic residues. The segment covering 386–395 (SRHRRRHHKS) has biased composition (basic residues). Basic and acidic residues-rich tracts occupy residues 396-408 (DRSS…ESEK) and 417-439 (SESE…RRDS). The stretch at 529-570 (RKENQVISAEEKRTMLRLQAEEKAKKEREIVSQFKELVDTLQ) forms a coiled coil.

It belongs to the NKAP family.

This is NKAP family protein UM04995 from Mycosarcoma maydis (Corn smut fungus).